Reading from the N-terminus, the 136-residue chain is Ribonuclease P protein component (136 aa).

Residues 116–136 (RPQRAAAKGSAGTTQKGTPRA) are disordered. Over residues 126–136 (AGTTQKGTPRA) the composition is skewed to polar residues.

Belongs to the RnpA family. Consists of a catalytic RNA component (M1 or rnpB) and a protein subunit.

It carries out the reaction Endonucleolytic cleavage of RNA, removing 5'-extranucleotides from tRNA precursor.. RNaseP catalyzes the removal of the 5'-leader sequence from pre-tRNA to produce the mature 5'-terminus. It can also cleave other RNA substrates such as 4.5S RNA. The protein component plays an auxiliary but essential role in vivo by binding to the 5'-leader sequence and broadening the substrate specificity of the ribozyme. The chain is Ribonuclease P protein component from Pseudarthrobacter chlorophenolicus (strain ATCC 700700 / DSM 12829 / CIP 107037 / JCM 12360 / KCTC 9906 / NCIMB 13794 / A6) (Arthrobacter chlorophenolicus).